The chain runs to 503 residues: Arabinose import ATP-binding protein AraG 1 (503 aa).

2 consecutive ABC transporter domains span residues 5–240 (LRFD…MVGR) and 253–497 (LGDV…LPQG). ATP is bound at residue 37–44 (GENGAGKS).

It belongs to the ABC transporter superfamily. Arabinose importer (TC 3.A.1.2.2) family. As to quaternary structure, the complex is composed of two ATP-binding proteins (AraG), two transmembrane proteins (AraH) and a solute-binding protein (AraF).

It is found in the cell inner membrane. It carries out the reaction L-arabinose(out) + ATP + H2O = L-arabinose(in) + ADP + phosphate + H(+). Part of the ABC transporter complex AraFGH involved in arabinose import. Responsible for energy coupling to the transport system. In Burkholderia thailandensis (strain ATCC 700388 / DSM 13276 / CCUG 48851 / CIP 106301 / E264), this protein is Arabinose import ATP-binding protein AraG 1.